The chain runs to 164 residues: MERFLENAMYASRWLLAPVYFGLSLALVALALKFFQEIIHVLPNIFSMAESDLILVLLSLVDMTLVGGLLVMVMFSGYENFVSQLDISENKEKLKWLGKMDATSLKNKVAASIVAISSIHLLRVFMDAKNVPDNKLMWYVIIHLTFVLSAFVMGYLDRLTRHNH.

A run of 3 helical transmembrane segments spans residues 10–32, 53–75, and 136–155; these read YASR…ALAL, LILV…MVMF, and LMWY…VMGY.

The protein belongs to the UPF0114 family.

The protein localises to the cell membrane. This chain is UPF0114 protein YqhA, found in Shigella flexneri.